Consider the following 351-residue polypeptide: Glycerol-3-phosphate dehydrogenase 1-like protein (351 aa).

12 to 17 (GSGNWG) is an NAD(+) binding site. K122 provides a ligand contact to substrate. A155 lines the NAD(+) pocket. K206 functions as the Proton acceptor in the catalytic mechanism. NAD(+) is bound by residues R271, K298, and Q300. Position 271 to 272 (271 to 272 (RN)) interacts with substrate.

Belongs to the NAD-dependent glycerol-3-phosphate dehydrogenase family. Interacts with SCN5A.

Its subcellular location is the cytoplasm. The enzyme catalyses sn-glycerol 3-phosphate + NAD(+) = dihydroxyacetone phosphate + NADH + H(+). Its function is as follows. Plays a role in regulating cardiac sodium current; decreased enzymatic activity with resulting increased levels of glycerol 3-phosphate activating the DPD1L-dependent SCN5A phosphorylation pathway, may ultimately lead to decreased sodium current; cardiac sodium current may also be reduced due to alterations of NAD(H) balance induced by DPD1L. In Pongo abelii (Sumatran orangutan), this protein is Glycerol-3-phosphate dehydrogenase 1-like protein (GPD1L).